The sequence spans 272 residues: Protein UL11 (272 aa).

The N-terminal stretch at 1-31 (MLFRYITFHREKVLYLTAACIFGVYISLHDA) is a signal peptide. Residues 32-224 (CIPVVGKIGT…PLQPSPQHQH (193 aa)) are Extracellular-facing. N-linked (GlcNAc...) asparagine; by host glycosylation is found at asparagine 42, asparagine 93, asparagine 100, and asparagine 142. Residues 142–200 (NGTFPTTTTKKPTTTTRTTTTTTQRTTTTRTTTTAKKTTISTTHHKHPSPKKSTTPNSH) form a disordered region. The span at 147–183 (TTTTKKPTTTTRTTTTTTQRTTTTRTTTTAKKTTIST) shows a compositional bias: low complexity. Residues 225 to 245 (LATHALWVLAVVIVIIIIIIF) traverse the membrane as a helical segment. The Cytoplasmic segment spans residues 246–272 (YFRIPQKLWLLWQHDKHGIVLIPQTDL).

Belongs to the RL11 family. As to quaternary structure, interacts with host PTPRC; this interaction affects T-cell signaling. Glycosylated.

It is found in the host cell membrane. The protein resides in the host endoplasmic reticulum. Plays a role in the modulation of host immune response by modulating T-cell function. Interacts with host PTPRC/CD45 and thereby reduces host TCR signaling and T-cell proliferation. In Human cytomegalovirus (strain Merlin) (HHV-5), this protein is Protein UL11 (UL11).